Reading from the N-terminus, the 305-residue chain is Energy-coupling factor transporter ATP-binding protein EcfA2 (305 aa).

The ABC transporter domain maps to 13–262 (LQNVDITFTN…KNLLQELLIE (250 aa)). 55–62 (GSTGSGKS) is a binding site for ATP.

This sequence belongs to the ABC transporter superfamily. Energy-coupling factor EcfA family. In terms of assembly, forms a stable energy-coupling factor (ECF) transporter complex composed of 2 membrane-embedded substrate-binding proteins (S component), 2 ATP-binding proteins (A component) and 2 transmembrane proteins (T component).

The protein localises to the cell membrane. Functionally, ATP-binding (A) component of a common energy-coupling factor (ECF) ABC-transporter complex. Unlike classic ABC transporters this ECF transporter provides the energy necessary to transport a number of different substrates. The sequence is that of Energy-coupling factor transporter ATP-binding protein EcfA2 from Spiroplasma kunkelii.